Consider the following 249-residue polypeptide: Ribonuclease 3 (249 aa).

The RNase III domain occupies S29 to R151. E65 lines the Mg(2+) pocket. D69 is an active-site residue. Mg(2+) is bound by residues E137 and E140. E140 is a catalytic residue. The 71-residue stretch at N179 to N249 folds into the DRBM domain. The interval G227–N249 is disordered. Residues Q236 to N249 show a composition bias toward basic and acidic residues.

Belongs to the ribonuclease III family. As to quaternary structure, homodimer. The cofactor is Mg(2+).

It localises to the cytoplasm. The enzyme catalyses Endonucleolytic cleavage to 5'-phosphomonoester.. In terms of biological role, digests double-stranded RNA. Involved in the processing of primary rRNA transcript to yield the immediate precursors to the large and small rRNAs (23S and 16S). Processes some mRNAs, and tRNAs when they are encoded in the rRNA operon. Processes pre-crRNA and tracrRNA of type II CRISPR loci if present in the organism. In Prochlorococcus marinus (strain SARG / CCMP1375 / SS120), this protein is Ribonuclease 3.